We begin with the raw amino-acid sequence, 687 residues long: Glycine--tRNA ligase beta subunit (687 aa).

This sequence belongs to the class-II aminoacyl-tRNA synthetase family. In terms of assembly, tetramer of two alpha and two beta subunits.

It is found in the cytoplasm. It carries out the reaction tRNA(Gly) + glycine + ATP = glycyl-tRNA(Gly) + AMP + diphosphate. This is Glycine--tRNA ligase beta subunit from Neisseria meningitidis serogroup A / serotype 4A (strain DSM 15465 / Z2491).